The primary structure comprises 101 residues: Omega-scoloptoxin(10)-Ssd1b (101 aa).

An N-terminal signal peptide occupies residues 1-23 (MNKLTIIFFTILLLTYIIVEKEA).

In terms of processing, contains 3 disulfide bonds. In terms of tissue distribution, expressed by the venom gland.

The protein resides in the secreted. Voltage-gated calcium channel inhibitor. In Scolopendra dehaani (Thai centipede), this protein is Omega-scoloptoxin(10)-Ssd1b.